A 481-amino-acid chain; its full sequence is Putative amino-acid transporter CPE0389 (481 aa).

The next 13 membrane-spanning stretches (helical) occupy residues leucine 7–asparagine 27, alanine 36–alanine 56, phenylalanine 87–leucine 107, leucine 127–valine 147, isoleucine 156–phenylalanine 176, serine 208–glycine 228, phenylalanine 241–valine 261, valine 289–methionine 309, phenylalanine 338–glycine 358, methionine 364–phenylalanine 384, arginine 401–alanine 421, alanine 422–isoleucine 442, and tyrosine 461–methionine 481.

It belongs to the amino acid-polyamine-organocation (APC) superfamily. Basic amino acid/polyamine antiporter (APA) (TC 2.A.3.2) family.

Its subcellular location is the cell membrane. Functionally, could be an amino acid transporter. The protein is Putative amino-acid transporter CPE0389 of Clostridium perfringens (strain 13 / Type A).